The chain runs to 803 residues: Spondin-1 (803 aa).

Positions 1–23 (MGLIFQPLFWQYVATSYALMVLG) are cleaved as a signal peptide. Residues 24-190 (FLDETVEKAI…DLTLEGGNEK (167 aa)) form the Reelin domain. 14 disulfide bridges follow: cysteine 39–cysteine 124, cysteine 152–cysteine 178, cysteine 195–cysteine 331, cysteine 196–cysteine 335, cysteine 198–cysteine 409, cysteine 437–cysteine 474, cysteine 448–cysteine 483, cysteine 453–cysteine 488, cysteine 496–cysteine 532, cysteine 507–cysteine 511, cysteine 542–cysteine 548, cysteine 553–cysteine 589, cysteine 564–cysteine 568, and cysteine 599–cysteine 604. Residues 191 to 383 (TIPDCCACGT…LTSLDHPQSP (193 aa)) enclose the Spondin domain. An N-linked (GlcNAc...) asparagine glycan is attached at asparagine 210. Positions 320, 349, and 353 each coordinate Ca(2+). The disordered stretch occupies residues 353–389 (DSGVTYESPNKPTIPQDKIRPLTSLDHPQSPSMTRGG). Over residues 354-365 (SGVTYESPNKPT) the composition is skewed to polar residues. 5 TSP type-1 domains span residues 436–489 (TCIY…PGCS), 495–549 (TCMM…EECE), 552–605 (SCIV…PECH), 608–662 (PCVL…PECP), and 664–717 (SCEL…RKCQ). The N-linked (GlcNAc...) asparagine glycan is linked to asparagine 677. The tract at residues 722–741 (NERRHLKDAREKRRSEKIKE) is disordered. One can recognise a TSP type-1 6 domain in the interval 750–802 (VCKMKPWTAWTECTKFCGGGIQERFMTVKKRFKSSQFTSCKDKKEIRACNVHP).

In terms of tissue distribution, expressed at high levels in the floor plate.

The protein localises to the secreted. The protein resides in the extracellular space. It localises to the extracellular matrix. Promotes the attachment of spinal cord and sensory neuron cells and the outgrowth of neurites in vitro. May contribute to the growth and guidance of axons in both the spinal cord and the PNS. This Xenopus laevis (African clawed frog) protein is Spondin-1 (spon1).